Reading from the N-terminus, the 318-residue chain is Probable cell division protein WhiA (318 aa).

Positions 281 to 314 form a DNA-binding region, H-T-H motif; the sequence is SLKELGQMLVPPVGKSGVNHRLRKIEEISKKLKE.

It belongs to the WhiA family.

Involved in cell division and chromosome segregation. The polypeptide is Probable cell division protein WhiA (Thermoanaerobacter sp. (strain X514)).